Here is a 582-residue protein sequence, read N- to C-terminus: uncharacterized protein (582 aa).

6 helical membrane passes run 17 to 37, 57 to 77, 131 to 151, 156 to 176, 239 to 259, and 271 to 291; these read VAMLMMLQLVSTLASLYLPTV, LGAVMLGVTGLQVLCAIGAVY, MTATVLVTAPIMCVGGIIMAI, ALTWLLLVSVPILAVANYWII, ALMLPVTTLTINASSVALIWF, and VGSLIAFLSYFAQILMAVLMA. An ABC transmembrane type-1 domain is found at 17-300; sequence VAMLMMLQLV…ATMTLAVLPR (284 aa). The ABC transporter domain maps to 335 to 571; that stretch reads VRLAGATFTY…CPTYAEFAAS (237 aa). 369-376 provides a ligand contact to ATP; sequence GSTGSGKS.

The protein belongs to the ABC transporter superfamily. MsbA family.

It is found in the cell membrane. This is an uncharacterized protein from Mycobacterium bovis (strain ATCC BAA-935 / AF2122/97).